Reading from the N-terminus, the 419-residue chain is MARAKFERKKPHVNIGTIGHVDHGKTTLTAAITMALAARGGATGRKYDEIDSAPEEKARGITINAAHVEYETENRHYAHVDCPGHADYVKNMITGAAQMDGAILVVSGADGPMPQTTEHVLLAKQVGVPAIVVFLNKADQVDDPELLELVELEVRDILDKYGFASDEVQILSGSALLALEALVENPNIKPGDSEWVDKIYNLMATVDEHIPTPKREMDKPFLLAVEDVFSITGRGTVATGRVERGTLKVNETVEIIGLRDTKTTTVTAIEMFQKTLDETIAGDNVGILLRGVQKKDIERGMVIAKPGTILPHTLFEGQVYVLTAEEGGRKSGFFKGYQPQFYVRTTDVTGKILDFSYIKQRNPSELSTMHSNPMVCPGDYVNMKIQLITPIAIEKGMRFAIREGGRTVGAGMVLEILES.

The region spanning 10–214 is the tr-type G domain; that stretch reads KPHVNIGTIG…TVDEHIPTPK (205 aa). Positions 19–26 are G1; sequence GHVDHGKT. A GTP-binding site is contributed by 19-26; the sequence is GHVDHGKT. Thr26 provides a ligand contact to Mg(2+). The interval 60–64 is G2; the sequence is GITIN. A G3 region spans residues 81 to 84; it reads DCPG. Residues 81 to 85 and 136 to 139 each bind GTP; these read DCPGH and NKAD. The segment at 136-139 is G4; it reads NKAD. The interval 174–176 is G5; that stretch reads SAL.

This sequence belongs to the TRAFAC class translation factor GTPase superfamily. Classic translation factor GTPase family. EF-Tu/EF-1A subfamily.

It is found in the plastid. The protein localises to the chloroplast. It carries out the reaction GTP + H2O = GDP + phosphate + H(+). Functionally, GTP hydrolase that promotes the GTP-dependent binding of aminoacyl-tRNA to the A-site of ribosomes during protein biosynthesis. This is Elongation factor Tu, chloroplastic (tufA) from Stigeoclonium helveticum (Green alga).